Reading from the N-terminus, the 670-residue chain is Zinc finger protein 233 (670 aa).

The KRAB domain occupies 8 to 79 (VTFKDVAVVF…ETEIQGDGCS (72 aa)). A C2H2-type 1; degenerate zinc finger spans residues 258–280 (QTSDENGKGLSVGSNLELHQQLH). A C2H2-type 2; degenerate zinc finger spans residues 311-336 (EKCYRNGDSGEGFSQGSHLQPHQRVS). The C2H2-type 3; degenerate zinc-finger motif lies at 342–364 (YRCQVYARSSNQNSCLPSHELTH). The segment at 370 to 392 (CTCGRCGKGFHHSLDFDIHCVDS) adopts a C2H2-type 4; degenerate zinc-finger fold. The C2H2-type 5; degenerate zinc finger occupies 398–420 (CKCDVYDKGFSQTSQLQAHQRGH). C2H2-type zinc fingers lie at residues 452–474 (YKCEVCDKGFSKASNLQAHQRIH), 480–502 (YKCDVCDKNFSRNSHLQAHQRVH), 508–530 (YKCDTCGKDFSQISHLQAHQRVH), 536–558 (YKCETCGKGFSQSSHLQDHQQVH), 564–586 (YKCDVCGKGFSWSSHLQAHQRVH), 592–614 (YKCEECRKGFIWNSYLHVHQRIH), and 620–642 (YKCGMCGKSFSQTSHLQAHQRVH).

It belongs to the krueppel C2H2-type zinc-finger protein family.

The protein resides in the nucleus. Its function is as follows. May be involved in transcriptional regulation. This chain is Zinc finger protein 233 (ZNF233), found in Homo sapiens (Human).